Consider the following 311-residue polypeptide: Natural killer cell receptor 2B4 (311 aa).

The first 19 residues, 1 to 19 (MLQQTVLLSLFLLLRAHQG), serve as a signal peptide directing secretion. The Extracellular portion of the chain corresponds to 20 to 223 (QDCADSSEEV…CQSVPSKFNY (204 aa)). A disulfide bridge links cysteine 22 with cysteine 118. Ig-like domains follow at residues 22–128 (CADS…LIFD) and 131–215 (ETPH…QSCQ). Residues asparagine 101, asparagine 144, asparagine 160, asparagine 183, asparagine 196, and asparagine 205 are each glycosylated (N-linked (GlcNAc...) asparagine). Cysteine 153 and cysteine 195 form a disulfide bridge. The helical transmembrane segment at 224 to 247 (LPFMVSIGILVKFFHGAIDCFCVW) threads the bilayer. At 248–311 (NRKRKQSQSI…RRLFQFINRS (64 aa)) the chain is on the cytoplasmic side. Residues 275-301 (RDQRGHFRASGSSSDVRGDERGQRESD) form a disordered region. A compositionally biased stretch (basic and acidic residues) spans 290–301 (VRGDERGQRESD).

In terms of assembly, interacts with CD48. Interacts (via phosphorylated ITSM 1-4) with SH2D1A (via SH2 domain); SH2D1A probably mediates association with FYN. Interacts (via phosphorylated ITSM 3) with PTPN11/SHP-2, INPP5D/SHIP1, PTPN6/SHP-1 and CSK; binding of SH2D1A/SAP prevents association with PTPN11, PTPN6 and CSK; conflictingly a similar association has been described for phosphorylated ITSM 1 also including GRB2 and PLCG1. Interacts weakly (via phosphorylated ITSM 2) with PTPN11/SHP-2 and CSK. Interacts with SH2D1B. Interacts with PIK3R1; PI3K recruits SH2D1A. Interacts with MHC class I proteins; the interaction is proposed to prevent self-killing of NK cells. In terms of processing, N-linked glycosylation is essential for the binding to its ligand CD48. Also O-glycosylated, in contrast, O-linked sialylation has a negative impact on ligand binding. Post-translationally, phosphorylated by FYN and CSK on tyrosine residues following activation. Coligation with inhibitory receptors such as KIR2DL1 inhibits phosphorylation upon contact of NK cells with sensitive target cells.

The protein resides in the membrane. It is found in the cell membrane. Its subcellular location is the membrane raft. Its function is as follows. Heterophilic receptor of the signaling lymphocytic activation molecule (SLAM) family; its ligand is CD48. SLAM receptors triggered by homo- or heterotypic cell-cell interactions are modulating the activation and differentiation of a wide variety of immune cells and thus are involved in the regulation and interconnection of both innate and adaptive immune response. Activities are controlled by presence or absence of small cytoplasmic adapter proteins, SH2D1A/SAP and/or SH2D1B/EAT-2. Acts as activating natural killer (NK) cell receptor. Activating function implicates association with SH2D1A and FYN. Downstreaming signaling involves predominantly VAV1, and, to a lesser degree, INPP5D/SHIP1 and CBL. Signal attenuation in the absence of SH2D1A is proposed to be dependent on INPP5D and to a lesser extent PTPN6/SHP-1 and PTPN11/SHP-2. Stimulates NK cell cytotoxicity, production of IFN-gamma and granule exocytosis. Optimal expansion and activation of NK cells seems to be dependent on the engagement of CD244 with CD48 expressed on neighboring NK cells. Acts as costimulator in NK activation by enhancing signals by other NK receptors such as NCR3 and NCR1. At early stages of NK cell differentiation may function as an inhibitory receptor possibly ensuring the self-tolerance of developing NK cells. Involved in the regulation of CD8(+) T-cell proliferation; expression on activated T-cells and binding to CD48 provides costimulatory-like function for neighboring T-cells. Inhibits inflammatory responses in dendritic cells (DCs). The chain is Natural killer cell receptor 2B4 (Cd244) from Rattus norvegicus (Rat).